We begin with the raw amino-acid sequence, 481 residues long: UDP-N-acetylmuramoyl-L-alanyl-D-glutamate--L-lysine ligase (481 aa).

Ser42 contacts UDP-N-acetyl-alpha-D-muramoyl-L-alanyl-D-glutamate. Position 118-124 (118-124) interacts with ATP; it reads GTKGKTT. UDP-N-acetyl-alpha-D-muramoyl-L-alanyl-D-glutamate is bound by residues Gln158, 160–161, Ser187, and Arg195; that span reads TT. Residue Lys229 is modified to N6-carboxylysine. An L-lysine recognition motif motif is present at residues 404–407; sequence DDPN.

Belongs to the MurCDEF family. MurE subfamily. In terms of processing, carboxylation is probably crucial for Mg(2+) binding and, consequently, for the gamma-phosphate positioning of ATP.

It is found in the cytoplasm. The enzyme catalyses UDP-N-acetyl-alpha-D-muramoyl-L-alanyl-D-glutamate + L-lysine + ATP = UDP-N-acetyl-alpha-D-muramoyl-L-alanyl-gamma-D-glutamyl-L-lysine + ADP + phosphate + H(+). The protein operates within cell wall biogenesis; peptidoglycan biosynthesis. In terms of biological role, catalyzes the addition of L-lysine to the nucleotide precursor UDP-N-acetylmuramoyl-L-alanyl-D-glutamate (UMAG) in the biosynthesis of bacterial cell-wall peptidoglycan. The polypeptide is UDP-N-acetylmuramoyl-L-alanyl-D-glutamate--L-lysine ligase (Streptococcus pyogenes serotype M18 (strain MGAS8232)).